The sequence spans 386 residues: L-arabinitol 4-dehydrogenase (386 aa).

Zn(2+) is bound by residues Cys-55, His-80, Glu-81, Cys-110, Cys-113, Cys-116, Cys-124, and Glu-165. NAD(+)-binding positions include 192 to 193 (PI), Asp-213, Arg-218, Ile-293, and 317 to 319 (QYR).

Belongs to the zinc-containing alcohol dehydrogenase family. As to quaternary structure, homotetramer. Requires Zn(2+) as cofactor.

The enzyme catalyses L-arabinitol + NAD(+) = L-xylulose + NADH + H(+). Its pathway is carbohydrate degradation; L-arabinose degradation via L-arabinitol; D-xylulose 5-phosphate from L-arabinose (fungal route): step 2/5. Catalyzes the NAD-dependent oxidation of L-arabinitol to L-xylulose in the fungal L-arabinose catabolic pathway. L-arabinose catabolism is important for using plant material as a carbon source. Not active with NADP as cosubstrate. The protein is L-arabinitol 4-dehydrogenase (ladA) of Aspergillus niger (strain ATCC MYA-4892 / CBS 513.88 / FGSC A1513).